The primary structure comprises 437 residues: Bifunctional protein GlmU (437 aa).

The pyrophosphorylase stretch occupies residues 1-223 (MHNTAVILAA…WDECRGVNSR (223 aa)). UDP-N-acetyl-alpha-D-glucosamine is bound by residues 8-11 (LAAG), lysine 22, glutamine 70, 75-76 (GT), 96-98 (YGD), glycine 135, glutamate 149, asparagine 164, and asparagine 221. Mg(2+) is bound at residue aspartate 98. Asparagine 221 provides a ligand contact to Mg(2+). Residues 224-244 (AELAAAEAAMQSRLRAAALAA) form a linker region. The interval 245–437 (GVTMTAPETV…AELRMTKGKR (193 aa)) is N-acetyltransferase. Residues arginine 310 and lysine 328 each contribute to the UDP-N-acetyl-alpha-D-glucosamine site. The active-site Proton acceptor is the histidine 340. UDP-N-acetyl-alpha-D-glucosamine is bound by residues tyrosine 343 and asparagine 354. Acetyl-CoA is bound by residues alanine 357, 363 to 364 (NY), serine 382, alanine 400, and arginine 417.

The protein in the N-terminal section; belongs to the N-acetylglucosamine-1-phosphate uridyltransferase family. In the C-terminal section; belongs to the transferase hexapeptide repeat family. As to quaternary structure, homotrimer. The cofactor is Mg(2+).

The protein localises to the cytoplasm. The catalysed reaction is alpha-D-glucosamine 1-phosphate + acetyl-CoA = N-acetyl-alpha-D-glucosamine 1-phosphate + CoA + H(+). It catalyses the reaction N-acetyl-alpha-D-glucosamine 1-phosphate + UTP + H(+) = UDP-N-acetyl-alpha-D-glucosamine + diphosphate. It participates in nucleotide-sugar biosynthesis; UDP-N-acetyl-alpha-D-glucosamine biosynthesis; N-acetyl-alpha-D-glucosamine 1-phosphate from alpha-D-glucosamine 6-phosphate (route II): step 2/2. The protein operates within nucleotide-sugar biosynthesis; UDP-N-acetyl-alpha-D-glucosamine biosynthesis; UDP-N-acetyl-alpha-D-glucosamine from N-acetyl-alpha-D-glucosamine 1-phosphate: step 1/1. Its pathway is bacterial outer membrane biogenesis; LPS lipid A biosynthesis. In terms of biological role, catalyzes the last two sequential reactions in the de novo biosynthetic pathway for UDP-N-acetylglucosamine (UDP-GlcNAc). The C-terminal domain catalyzes the transfer of acetyl group from acetyl coenzyme A to glucosamine-1-phosphate (GlcN-1-P) to produce N-acetylglucosamine-1-phosphate (GlcNAc-1-P), which is converted into UDP-GlcNAc by the transfer of uridine 5-monophosphate (from uridine 5-triphosphate), a reaction catalyzed by the N-terminal domain. The chain is Bifunctional protein GlmU from Acidiphilium cryptum (strain JF-5).